The following is a 328-amino-acid chain: Tetraacyldisaccharide 4'-kinase (328 aa).

55–62 (TAGGNGKT) contributes to the ATP binding site.

The protein belongs to the LpxK family.

The enzyme catalyses a lipid A disaccharide + ATP = a lipid IVA + ADP + H(+). It participates in glycolipid biosynthesis; lipid IV(A) biosynthesis; lipid IV(A) from (3R)-3-hydroxytetradecanoyl-[acyl-carrier-protein] and UDP-N-acetyl-alpha-D-glucosamine: step 6/6. Transfers the gamma-phosphate of ATP to the 4'-position of a tetraacyldisaccharide 1-phosphate intermediate (termed DS-1-P) to form tetraacyldisaccharide 1,4'-bis-phosphate (lipid IVA). This chain is Tetraacyldisaccharide 4'-kinase, found in Shigella boydii serotype 4 (strain Sb227).